The following is a 310-amino-acid chain: Ribosomal RNA small subunit methyltransferase H (310 aa).

S-adenosyl-L-methionine is bound by residues 32–34 (GGH), D52, F79, D100, and Q107.

This sequence belongs to the methyltransferase superfamily. RsmH family.

Its subcellular location is the cytoplasm. The catalysed reaction is cytidine(1402) in 16S rRNA + S-adenosyl-L-methionine = N(4)-methylcytidine(1402) in 16S rRNA + S-adenosyl-L-homocysteine + H(+). In terms of biological role, specifically methylates the N4 position of cytidine in position 1402 (C1402) of 16S rRNA. In Geobacillus kaustophilus (strain HTA426), this protein is Ribosomal RNA small subunit methyltransferase H.